Reading from the N-terminus, the 708-residue chain is Soluble guanylate cyclase gcy-37 (708 aa).

Residue His105 participates in heme binding. The stretch at 368–409 (LNQSRICQMELNKKLEETMKKMKKMTEELEVKKSQTDRLLFE) forms a coiled coil. Residues 434–562 (SVIFTDIPDF…NTVNVTKSIC (129 aa)) enclose the Guanylate cyclase domain. Mg(2+) is bound by residues Asp439 and Asp483.

This sequence belongs to the adenylyl cyclase class-4/guanylyl cyclase family. Heterodimer; with other soluble guanylate cyclases. It depends on heme as a cofactor. Expressed in a small number of neurons, corresponding to URX, AQR and PQR neurons.

It is found in the cytoplasm. It carries out the reaction GTP = 3',5'-cyclic GMP + diphosphate. Its activity is regulated as follows. May be regulated by molecular oxygen. Probably not activated by nitric oxide (NO). Synthesizes cyclic GMP (cGMP) from GTP. May play a role in sensory neurons. This is Soluble guanylate cyclase gcy-37 (gcy-37) from Caenorhabditis elegans.